A 117-amino-acid polypeptide reads, in one-letter code: UPF0295 protein GK0479 (117 aa).

2 consecutive transmembrane segments (helical) span residues 12-32 and 42-62; these read IRTFALSLIFIGVIVMYLGLF and LFMLFGMLFLVASGIVYFWIG.

This sequence belongs to the UPF0295 family.

The protein resides in the cell membrane. This chain is UPF0295 protein GK0479, found in Geobacillus kaustophilus (strain HTA426).